Here is a 367-residue protein sequence, read N- to C-terminus: MTPENLPIERYDDQLAEKTARLKTLMSPFTAPEPEVFRSPVSHYRMRAEFRIWHDEDEMYHIMFDQQTKQRIRVDKFPAASELINRLMSALIAAIKPEPILRRKLFQIDYLSTRSGKIIASLLYHRKLDDEWQQQAEKLRDDLRAQGFDLQLIGRASKMKIMLDQDYVDEVLPVAGRDMIYRQVENSFTQPNAALNIQMLEWALDVTTGSKGDLLELYCGNGNFSLALARNFERVLATEIAKPSVAAAQYNIAANQIDNVQIIRMAAEDFTQAMNGVREFNRLKGIDLSSYNCETIFVDPPRSGLDDETVKMVQAYPRILYISCNPETLCANLETLQQTHSISRLALFDQFPYTHHMECGVLLEKRV.

S-adenosyl-L-methionine is bound by residues Gln-190, Tyr-218, Asn-223, Glu-239, and Asp-299. Cys-324 acts as the Nucleophile in catalysis. Residue Glu-358 is the Proton acceptor of the active site.

The protein belongs to the class I-like SAM-binding methyltransferase superfamily. RNA M5U methyltransferase family. TrmA subfamily.

It catalyses the reaction uridine(54) in tRNA + S-adenosyl-L-methionine = 5-methyluridine(54) in tRNA + S-adenosyl-L-homocysteine + H(+). It carries out the reaction uridine(341) in tmRNA + S-adenosyl-L-methionine = 5-methyluridine(341) in tmRNA + S-adenosyl-L-homocysteine + H(+). In terms of biological role, dual-specificity methyltransferase that catalyzes the formation of 5-methyluridine at position 54 (m5U54) in all tRNAs, and that of position 341 (m5U341) in tmRNA (transfer-mRNA). This chain is tRNA/tmRNA (uracil-C(5))-methyltransferase, found in Serratia proteamaculans (strain 568).